A 765-amino-acid chain; its full sequence is Leucine-rich repeat and calponin homology domain-containing protein 2 (765 aa).

Disordered regions lie at residues 1-39 and 55-76; these read MAASQGGGGNSGGGGCGGGGSSGGCGTAGGGGGGAGGGG and LFGQPFPNGPPWNPGSLQPQHT. LRR repeat units lie at residues 89–110, 112–133, 135–156, 158–179, 180–201, 203–224, 226–248, 249–269, and 271–292; these read SSGILSLSGRKLRDFPGSGYDL, DTTQADLSRNRFTEIPSDVWLF, PLETLNLYHNCIKTIPEAIKNL, MLTYLNISRNLLSTLPKYLFDL, PLKVLVVSNNKLVSIPEEIGKL, DLMELDISCNEIQVLPQQMGKL, SLRELNIRRNNLHVLPDELGDLP, LVKLDFSCNKVTEIPVCYRKL, and HLQVIILDNNPLQVPPAQICLK. The disordered stretch occupies residues 316–401; it reads LDLPSLSKRM…GSKTDSQKDQ (86 aa). Positions 378 to 388 are enriched in basic and acidic residues; the sequence is SNREQTSRNDS. Residues 438-472 adopt a coiled-coil conformation; the sequence is SEKSRKNEELGDEKRLEKEQLLAEEEDDDLKEVTD. Disordered regions lie at residues 498 to 552 and 565 to 628; these read RNKP…QSEE and KYKS…EYGA. The span at 503–512 shows a compositional bias: basic and acidic residues; the sequence is QTVECEKSVS. Composition is skewed to polar residues over residues 518-529 and 584-595; these read SPLSPLTWQPLE and DNANMSTQSPVS. The Calponin-homology (CH) domain occupies 642–755; sequence LREEREQIRQ…VTVQALLELP (114 aa).

May play a role in the organization of the cytoskeleton. In Homo sapiens (Human), this protein is Leucine-rich repeat and calponin homology domain-containing protein 2 (LRCH2).